A 215-amino-acid chain; its full sequence is Cytochrome b6 (215 aa).

The helical transmembrane segment at 32 to 52 threads the bilayer; sequence VFYCFGGMTLTCFLVQLATGF. Cys-35 serves as a coordination point for heme c. Heme b is bound by residues His-86 and His-100. 3 helical membrane-spanning segments follow: residues 90–110, 116–136, and 186–206; these read ASMM…TGGF, LTWI…VTGY, and LHTL…FLMI. Heme b contacts are provided by His-187 and His-202.

The protein belongs to the cytochrome b family. PetB subfamily. As to quaternary structure, the 4 large subunits of the cytochrome b6-f complex are cytochrome b6, subunit IV (17 kDa polypeptide, PetD), cytochrome f and the Rieske protein, while the 4 small subunits are PetG, PetL, PetM and PetN. The complex functions as a dimer. Heme b is required as a cofactor. It depends on heme c as a cofactor.

The protein resides in the plastid. The protein localises to the chloroplast thylakoid membrane. In terms of biological role, component of the cytochrome b6-f complex, which mediates electron transfer between photosystem II (PSII) and photosystem I (PSI), cyclic electron flow around PSI, and state transitions. This chain is Cytochrome b6, found in Cyanidium caldarium (Red alga).